Reading from the N-terminus, the 74-residue chain is Alpha-elapitoxin-Aa2d (74 aa).

5 disulfide bridges follow: cysteine 3-cysteine 21, cysteine 14-cysteine 42, cysteine 27-cysteine 31, cysteine 46-cysteine 57, and cysteine 58-cysteine 63.

It belongs to the three-finger toxin family. Long-chain subfamily. Type II alpha-neurotoxin sub-subfamily. Expressed by the venom gland.

The protein localises to the secreted. Functionally, binds with high affinity to muscular (alpha-1/CHRNA1) and neuronal (alpha-7/CHRNA7) nicotinic acetylcholine receptor (nAChR) and inhibits acetylcholine from binding to the receptor, thereby impairing neuromuscular and neuronal transmission. The protein is Alpha-elapitoxin-Aa2d of Acanthophis antarcticus (Common death adder).